The chain runs to 1136 residues: MQAMDGEVLLPALYEEEEEEEEEEEEVEEEQVEKGGSLGSLSMGKHRGLSLTETELEELRAQVLQLVAELEETRELAGQHEDDSLELQGLLEDERLASAQQAEVFTKQIQQLQGELQHLREEISLLEHEKESELKEMEQELHLAQAEIQNLRQAAADSATEHESDIASLQDDLCRLQNDLDDMERIRGDYEMEIASLRAEMELKTSEPSNLSISDFSGIQDELHHLRERYNLLNEEYQALRESNSSLTGQLAELESDRTRRATERWLESHLLRSTMSSESQTSELDFPEPDPVMQLLRQQLLGAEEQMQDMQDKCKNLYCELEELQHHRRTSEEEQKRLQRELKCAQNEVLRFQTSHSTQQHEELKSRLCTLQQKYDASQDEHSELLKVQMQLETELQQLRLLRCTPVESQSEKELMCRLQKLQAQHQCSVNEKEQLLEVQHHLHDKLRCHESEVHRLRSMVDCLREKNEKNSGIHLQLQEMKGLYQFSRDELERQKHMYDQLEQDFLLCQQELTELKSSQSLCEENGNCSNKCDALLARLTELQDKFKASQEEIGHLQMEQCELLEDQRRLQEEQGQLQEELHRLTFPQPKCGILQKSQELLSKLQDLCEMQLLYQNMQEQQRKLTQNQECVLKEQLEAHKHLRGFKESHFQEVLANPQDARGPKSSSCENKFKVLMDQLQALQVLYDTSQKQQEVLQREHGRLMEERKRLQAELQLCMEEMQVLQTQSPMIKRSFEYCGKNSGSRAPSTENFHRSYESSIDENEGYQKSYVSSQPSTETFLKSYDSSTSANEAFEKSYCSSSTSVSYKKSYGSVSSGETLHRSYASSSTDEDPAEPEDLEHFEETVAKVLTKLQAVKALYQVSQEEHCQLQQRMHRLLAKQKELTEELQCCEKELRECMESLGKPLPPQSDKCEIKELQTKLRELQLQYQASMDEQGRLLAVQEQLEGQLQCCQEELRQLKENRPSISSEARGKNVNKNMNKNANGVRNKKLSMACSEDLENGFENEKNLEVMLYYKASQRRLDELMKEEKEIEEARKKEREKKAKKDLCKLATNPAADPRAEPEPTEDEEENFEEYREGEDESCEAAEEGNPLKLSESKKPSPAPDPPIFSLPLVGLVVISALLWCWWAETSS.

The segment at methionine 1–histidine 46 is disordered. Over residues tyrosine 14–glutamine 31 the composition is skewed to acidic residues. Residue serine 50 is modified to Phosphoserine. Coiled-coil stretches lie at residues valine 293–glutamate 631 and leucine 681–serine 730. Disordered regions lie at residues glycine 741–valine 773, glycine 814–glutamate 837, asparagine 965–arginine 990, and lysine 1040–proline 1111. Over residues asparagine 743 to glutamate 752 the composition is skewed to polar residues. Positions glutamate 839 to glutamate 972 form a coiled coil. The segment covering lysine 976–valine 989 has biased composition (low complexity). Residues tyrosine 1017 to asparagine 1057 are a coiled coil. Basic and acidic residues predominate over residues lysine 1040 to cysteine 1052. The segment covering glutamate 1067 to glutamate 1091 has biased composition (acidic residues). The chain crosses the membrane as a helical span at residues isoleucine 1112 to alanine 1132.

Present at high level in testis (at protein level).

It localises to the cytoplasmic vesicle. It is found in the secretory vesicle. The protein resides in the acrosome membrane. Its function is as follows. May play a role in acrosome formation in spermatogenesis and in fertilization. The protein is Coiled-coil domain-containing protein 136 (Ccdc136) of Mus musculus (Mouse).